The chain runs to 200 residues: NADH-quinone oxidoreductase chain 10 (200 aa).

Helical transmembrane passes span 2-22 (MTFAFYLFAISACVAGFMVVI), 26-46 (PVHSVLWLILAFLSAAGLFVL), 51-71 (FVAMLLVVVYVGAVAVLFLFV), 90-110 (LPLALVIGVVLLAQLGIAFSG), and 144-164 (VLMFQLAGLVLLVAMIGAIVL).

It belongs to the complex I subunit 6 family. As to quaternary structure, NDH-1 is composed of at least 14 different subunits, Nqo1 to Nqo14. The complex has a L-shaped structure, with the hydrophobic arm (subunits Nqo7, Nqo8, Nqo10 to Nqo14) embedded in the inner membrane and the hydrophilic peripheral arm (subunits Nqo1 to Nqo6, Nqo9) protruding into the bacterial cytoplasm. The hydrophilic domain contains all the redox centers.

Its subcellular location is the cell inner membrane. It carries out the reaction a quinone + NADH + 5 H(+)(in) = a quinol + NAD(+) + 4 H(+)(out). Functionally, NDH-1 shuttles electrons from NADH, via FMN and iron-sulfur (Fe-S) centers, to quinones in the respiratory chain. The immediate electron acceptor for the enzyme in this species is believed to be ubiquinone. Couples the redox reaction to proton translocation (for every two electrons transferred, four hydrogen ions are translocated across the cytoplasmic membrane), and thus conserves the redox energy in a proton gradient. The polypeptide is NADH-quinone oxidoreductase chain 10 (Paracoccus denitrificans).